Consider the following 134-residue polypeptide: MAKGRTPRSFSQRYGKWNAKFTAFSNPTVASTILTNVAPIAQGNFQTNVPKFTSVNEQVSAVLTQYGVTGPSRAIYQGYGLKVARALNRIGAGPALTNMVAGLKAYYVSAYGANPEILDAVTNIILGSPTGYVS.

As to quaternary structure, homodimer.

The protein localises to the virion. In terms of biological role, self-assembles to form a helical, filamentous nucleocapsid. The capsid proteins wrap around the DNA and maintain it in an A-form by non-specific desolvation and specific coordination of the DNA phosphate groups by positively charged residues. This certainly protects the viral DNA under conditions such as the extreme desiccation of its host. This Saccharolobus solfataricus rod-shaped virus 1 (SSRV1) protein is Major capsid protein.